The chain runs to 441 residues: Chromosomal replication initiator protein DnaA (441 aa).

Positions M1–I80 are domain I, interacts with DnaA modulators. Residues I80 to N102 are domain II. The domain III, AAA+ region stretch occupies residues I103–S320. 4 residues coordinate ATP: G147, G149, K150, and T151. Residues S321 to E441 form a domain IV, binds dsDNA region.

It belongs to the DnaA family. As to quaternary structure, oligomerizes as a right-handed, spiral filament on DNA at oriC.

Its subcellular location is the cytoplasm. Plays an essential role in the initiation and regulation of chromosomal replication. ATP-DnaA binds to the origin of replication (oriC) to initiate formation of the DNA replication initiation complex once per cell cycle. Binds the DnaA box (a 9 base pair repeat at the origin) and separates the double-stranded (ds)DNA. Forms a right-handed helical filament on oriC DNA; dsDNA binds to the exterior of the filament while single-stranded (ss)DNA is stabiized in the filament's interior. The ATP-DnaA-oriC complex binds and stabilizes one strand of the AT-rich DNA unwinding element (DUE), permitting loading of DNA polymerase. After initiation quickly degrades to an ADP-DnaA complex that is not apt for DNA replication. Binds acidic phospholipids. This chain is Chromosomal replication initiator protein DnaA, found in Desulforamulus reducens (strain ATCC BAA-1160 / DSM 100696 / MI-1) (Desulfotomaculum reducens).